Here is a 483-residue protein sequence, read N- to C-terminus: Probable glycine dehydrogenase (decarboxylating) subunit 2 (483 aa).

Lys-264 carries the N6-(pyridoxal phosphate)lysine modification.

It belongs to the GcvP family. C-terminal subunit subfamily. The glycine cleavage system is composed of four proteins: P, T, L and H. In this organism, the P 'protein' is a heterodimer of two subunits. It depends on pyridoxal 5'-phosphate as a cofactor.

The enzyme catalyses N(6)-[(R)-lipoyl]-L-lysyl-[glycine-cleavage complex H protein] + glycine + H(+) = N(6)-[(R)-S(8)-aminomethyldihydrolipoyl]-L-lysyl-[glycine-cleavage complex H protein] + CO2. The glycine cleavage system catalyzes the degradation of glycine. The P protein binds the alpha-amino group of glycine through its pyridoxal phosphate cofactor; CO(2) is released and the remaining methylamine moiety is then transferred to the lipoamide cofactor of the H protein. In Nitrosomonas eutropha (strain DSM 101675 / C91 / Nm57), this protein is Probable glycine dehydrogenase (decarboxylating) subunit 2.